Reading from the N-terminus, the 192-residue chain is Riboflavin kinase (192 aa).

Positions 47 and 49 each coordinate Mg(2+). The active-site Nucleophile is glutamate 129.

This sequence belongs to the flavokinase family. Requires Zn(2+) as cofactor. Mg(2+) is required as a cofactor.

The catalysed reaction is riboflavin + ATP = FMN + ADP + H(+). The protein operates within cofactor biosynthesis; FMN biosynthesis; FMN from riboflavin (ATP route): step 1/1. Its function is as follows. Catalyzes the phosphorylation of riboflavin (vitamin B2) to form flavin mononucleotide (FMN) coenzyme. The sequence is that of Riboflavin kinase (FMN1) from Yarrowia lipolytica (strain CLIB 122 / E 150) (Yeast).